The sequence spans 252 residues: NAD(P)H-quinone oxidoreductase subunit K (252 aa).

[4Fe-4S] cluster-binding residues include Cys73, Cys74, Cys138, and Cys169. Residues 225-236 (ASTQKQALSPSQ) are compositionally biased toward polar residues. The interval 225–252 (ASTQKQALSPSQEIPLEDQNEATKEIAQ) is disordered.

The protein belongs to the complex I 20 kDa subunit family. NDH-1 can be composed of about 15 different subunits; different subcomplexes with different compositions have been identified which probably have different functions. The cofactor is [4Fe-4S] cluster.

It is found in the cellular thylakoid membrane. The enzyme catalyses a plastoquinone + NADH + (n+1) H(+)(in) = a plastoquinol + NAD(+) + n H(+)(out). The catalysed reaction is a plastoquinone + NADPH + (n+1) H(+)(in) = a plastoquinol + NADP(+) + n H(+)(out). NDH-1 shuttles electrons from an unknown electron donor, via FMN and iron-sulfur (Fe-S) centers, to quinones in the respiratory and/or the photosynthetic chain. The immediate electron acceptor for the enzyme in this species is believed to be plastoquinone. Couples the redox reaction to proton translocation, and thus conserves the redox energy in a proton gradient. Cyanobacterial NDH-1 also plays a role in inorganic carbon-concentration. This chain is NAD(P)H-quinone oxidoreductase subunit K, found in Prochlorococcus marinus (strain MIT 9211).